The chain runs to 508 residues: Small ribosomal subunit protein mS47 (508 aa).

It belongs to the enoyl-CoA hydratase/isomerase family. Mitochondrion-specific ribosomal protein mS47 subfamily. Component of the mitochondrial small ribosomal subunit (mt-SSU). Mature N.crassa 74S mitochondrial ribosomes consist of a small (37S) and a large (54S) subunit. The 37S small subunit contains a 16S ribosomal RNA (16S mt-rRNA) and 32 different proteins. The 54S large subunit contains a 23S rRNA (23S mt-rRNA) and 42 different proteins. mS47 forms a protuberance of the N.crassa mitoribosome and retains a solvent-exposed cavity liekly capable of accommodating a substrate, in accordance with it being an active enzyme as well as an integral constituent of the mitoribosome.

Its subcellular location is the mitochondrion. The catalysed reaction is 3-hydroxy-2-methylpropanoyl-CoA + H2O = 3-hydroxy-2-methylpropanoate + CoA + H(+). In terms of biological role, component of the mitochondrial ribosome (mitoribosome), a dedicated translation machinery responsible for the synthesis of mitochondrial genome-encoded proteins, including at least some of the essential transmembrane subunits of the mitochondrial respiratory chain. The mitoribosomes are attached to the mitochondrial inner membrane and translation products are cotranslationally integrated into the membrane. mS47 has enzymatic activity in vitro, and is able to catalyze the specific hydrolysis of 3-hydroxyisobutyryl-CoA (HIBYL-CoA). However, because the turnover rate of mS47 is only a fraction of that of the homologous mammalian enzyme, the physiological function of this activity remains unclear. In Neurospora crassa (strain ATCC 24698 / 74-OR23-1A / CBS 708.71 / DSM 1257 / FGSC 987), this protein is Small ribosomal subunit protein mS47 (ehd3).